Consider the following 376-residue polypeptide: 1-deoxy-D-xylulose 5-phosphate reductoisomerase (376 aa).

The NADPH site is built by Thr-12, Gly-13, Ser-14, Ile-15, Asn-39, and Asn-116. Lys-117 serves as a coordination point for 1-deoxy-D-xylulose 5-phosphate. Glu-118 is an NADPH binding site. Asp-142 is a binding site for Mn(2+). The 1-deoxy-D-xylulose 5-phosphate site is built by Ser-143, Glu-144, Ser-164, and His-187. Glu-144 is a Mn(2+) binding site. Gly-193 lines the NADPH pocket. Residues Ser-200, Asn-205, Lys-206, and Glu-209 each coordinate 1-deoxy-D-xylulose 5-phosphate. Glu-209 serves as a coordination point for Mn(2+).

It belongs to the DXR family. The cofactor is Mg(2+). It depends on Mn(2+) as a cofactor.

The catalysed reaction is 2-C-methyl-D-erythritol 4-phosphate + NADP(+) = 1-deoxy-D-xylulose 5-phosphate + NADPH + H(+). Its pathway is isoprenoid biosynthesis; isopentenyl diphosphate biosynthesis via DXP pathway; isopentenyl diphosphate from 1-deoxy-D-xylulose 5-phosphate: step 1/6. Its function is as follows. Catalyzes the NADPH-dependent rearrangement and reduction of 1-deoxy-D-xylulose-5-phosphate (DXP) to 2-C-methyl-D-erythritol 4-phosphate (MEP). The chain is 1-deoxy-D-xylulose 5-phosphate reductoisomerase from Thermotoga maritima (strain ATCC 43589 / DSM 3109 / JCM 10099 / NBRC 100826 / MSB8).